The following is a 460-amino-acid chain: Tubby-related protein 3 (460 aa).

Disordered regions lie at residues 37–132 (KKQR…ETAP) and 151–193 (YDEE…GVTA). The segment covering 151–162 (YDEEPDKEEDEG) has biased composition (acidic residues). A compositionally biased stretch (low complexity) spans 166 to 188 (SSPSARSEESAAASQKAASETGA).

Belongs to the TUB family. In terms of assembly, associates with the IFT complex A (IFT-A). Interacts with SIRT1. In terms of tissue distribution, widely expressed including eyes and adipose depots.

It localises to the nucleus. The protein localises to the cell membrane. Its subcellular location is the cell projection. It is found in the cilium. The protein resides in the cytoplasm. It localises to the secreted. Its function is as follows. Negative regulator of the Shh signaling transduction pathway: recruited to primary cilia via association with the IFT complex A (IFT-A) and is required for recruitment of G protein-coupled receptor GPR161 to cilia, a promoter of PKA-dependent basal repression machinery in Shh signaling. Binds to phosphorylated inositide (phosphoinositide) lipids. Both IFT-A- and phosphoinositide-binding properties are required to regulate ciliary G protein-coupled receptor trafficking. During adipogenesis, regulates ciliary trafficking of FFAR4 in preadipocytes. This chain is Tubby-related protein 3, found in Mus musculus (Mouse).